Reading from the N-terminus, the 76-residue chain is Virulence-associated protein VagC (76 aa).

The SpoVT-AbrB domain occupies 4–45; it reads VSIFKNGNNRAIRLPRDLDFEGVSELEIVREGDSIILRPVRP.

Belongs to the VapB family.

The protein is Virulence-associated protein VagC (vagC) of Salmonella dublin.